The chain runs to 222 residues: Ribosomal RNA small subunit methyltransferase G (222 aa).

S-adenosyl-L-methionine is bound by residues G85, L90, 108–110 (DAT), 136–137 (VE), and R150.

The protein belongs to the methyltransferase superfamily. RNA methyltransferase RsmG family.

It is found in the cytoplasm. Specifically methylates the N7 position of a guanine in 16S rRNA. This is Ribosomal RNA small subunit methyltransferase G from Chlorobium phaeobacteroides (strain DSM 266 / SMG 266 / 2430).